The primary structure comprises 724 residues: Golgin subfamily A member 6-like protein 6 (724 aa).

5 disordered regions span residues methionine 1–alanine 108, glutamine 314–glutamine 342, methionine 374–arginine 454, glutamine 517–arginine 548, and tryptophan 561–histidine 724. Positions leucine 15–threonine 29 are enriched in basic residues. Over residues methionine 39–proline 60 the composition is skewed to basic and acidic residues. Composition is skewed to polar residues over residues glutamine 61–serine 71 and asparagine 79–glycine 91. Residues serine 94–alanine 108 are compositionally biased toward basic and acidic residues. Residues glutamate 164 to methionine 686 adopt a coiled-coil conformation.

It belongs to the GOLGA6 family.

This Homo sapiens (Human) protein is Golgin subfamily A member 6-like protein 6 (GOLGA6L6).